We begin with the raw amino-acid sequence, 464 residues long: Kynureninase (464 aa).

Met-1 carries the post-translational modification N-acetylmethionine. Pyridoxal 5'-phosphate is bound by residues Leu-137, Thr-138, 165-168 (FPSD), Ser-221, Asp-250, His-253, and Tyr-275. Lys-276 carries the N6-(pyridoxal phosphate)lysine modification. The pyridoxal 5'-phosphate site is built by Trp-305 and Asn-333.

The protein belongs to the kynureninase family. As to quaternary structure, homodimer. Pyridoxal 5'-phosphate serves as cofactor.

The protein localises to the cytoplasm. It is found in the cytosol. The enzyme catalyses L-kynurenine + H2O = anthranilate + L-alanine + H(+). It catalyses the reaction 3-hydroxy-L-kynurenine + H2O = 3-hydroxyanthranilate + L-alanine + H(+). Its pathway is amino-acid degradation; L-kynurenine degradation; L-alanine and anthranilate from L-kynurenine: step 1/1. The protein operates within cofactor biosynthesis; NAD(+) biosynthesis; quinolinate from L-kynurenine: step 2/3. Catalyzes the cleavage of L-kynurenine (L-Kyn) and L-3-hydroxykynurenine (L-3OHKyn) into anthranilic acid (AA) and 3-hydroxyanthranilic acid (3-OHAA), respectively. Has a preference for the L-3-hydroxy form. Also has cysteine-conjugate-beta-lyase activity. The protein is Kynureninase (Kynu) of Mus musculus (Mouse).